A 327-amino-acid polypeptide reads, in one-letter code: GMP reductase (327 aa).

The active-site Thioimidate intermediate is the Cys176. Residue 205-228 (IIADGGIRTHGDIAKSIRFGASMV) coordinates NADP(+).

It belongs to the IMPDH/GMPR family. GuaC type 2 subfamily.

The catalysed reaction is IMP + NH4(+) + NADP(+) = GMP + NADPH + 2 H(+). Catalyzes the irreversible NADPH-dependent deamination of GMP to IMP. It functions in the conversion of nucleobase, nucleoside and nucleotide derivatives of G to A nucleotides, and in maintaining the intracellular balance of A and G nucleotides. The protein is GMP reductase of Streptococcus agalactiae serotype V (strain ATCC BAA-611 / 2603 V/R).